A 635-amino-acid chain; its full sequence is Isethionate TRAP transporter permease protein DctMQ (635 aa).

The next 16 helical transmembrane spans lie at 38–58 (KPFL…QTLY), 75–95 (TEEM…PVAI), 117–137 (ISWI…LWQS), 154–174 (LQLP…LMAV), 192–212 (TVIG…ADYI), 217–237 (VLFG…IGLG), 266–286 (FPIM…AGGL), 299–319 (GALP…FAAI), 350–370 (AIVA…PFVV), 379–399 (IGKL…ALMA), 431–451 (WALM…MTPT), 453–473 (AAAL…RELS), 481–501 (VVEA…ATIF), 526–546 (IAIL…MEAL), 572–592 (IIMV…VNLF), and 609–629 (VLPL…VPAI).

In the N-terminal section; belongs to the TRAP transporter small permease family. The protein in the C-terminal section; belongs to the TRAP transporter large permease family. In terms of assembly, the complex comprises the periplasmic solute receptor protein DctP, and the fused transmembrane protein DctMQ.

The protein resides in the cell inner membrane. It functions in the pathway organosulfur degradation; alkanesulfonate degradation. In terms of biological role, part of the tripartite ATP-independent periplasmic (TRAP) transport system DctPQM involved in the uptake of isethionate (2-hydroxyethanesulfonate), which is then catabolized by enzymes encoded by adjacent genes in the locus. Thereby is involved in an anaerobic respiration pathway that converts the sulfonate isethionate to ammonia, acetate and sulfide. This Oleidesulfovibrio alaskensis (strain ATCC BAA-1058 / DSM 17464 / G20) (Desulfovibrio alaskensis) protein is Isethionate TRAP transporter permease protein DctMQ.